We begin with the raw amino-acid sequence, 166 residues long: C-signal (166 aa).

In terms of processing, the mature C-signal (p17) is derived from the precursor sequence (p25) by proteolytic cleavage. The subtilisin-like protease PopC is directly responsible for cleavage of p25 to p17. The cleavage site is probably located between amino acid residues 60 and 68 in p25.

It localises to the secreted. It is found in the cell outer membrane. With respect to regulation, synthesized as a precursor protein (p25), which is cleaved after secretion to generate the mature active C-signal (p17). The p25 precursor purified from M.xanthus cells does not display C-signal activity. Cell-cell signaling protein required for fruiting body formation, a multicellular developmental program that is induced in response to starvation. Necessary for rippling, cellular aggregation, spore differentiation and for gene expression that is initiated after 6 hours of starvation. In starving cells, the C-signal directly induces aggregation and sporulation, which are induced at distinct threshold levels of C-signaling. Contact with C-signaling induces cells to glide with high speed and low stop and reversal frequencies toward aggregation centers. The C-signal acts as a morphogen and induces distinct events at distinct threshold levels. A regulated increase in the level of C-signaling during development ensures the correct temporal order of aggregation and sporulation. This Myxococcus xanthus protein is C-signal.